We begin with the raw amino-acid sequence, 430 residues long: MEF2-activating motif and SAP domain-containing transcriptional regulator (430 aa).

The MEF2-binding signature appears at 12-28 (IIRSKFRSVLQLRIHRR). Disordered regions lie at residues 84 to 172 (CWSL…PLPH), 204 to 239 (KSML…RFRP), 280 to 301 (VATT…APAS), and 330 to 416 (EDQV…DLSD). Residues 87–103 (LKKESPKTSQHWREPKP) show a composition bias toward basic and acidic residues. Pro residues predominate over residues 147–170 (QPPPRMKPTPLTPSPPGVPSPSPL). The SAP domain maps to 181-215 (LEELTVSELRQQLRLRGLPVSGTKSMLLERMRGGA). Residues 207–228 (LLERMRGGAPPRERPKARREDS) are compositionally biased toward basic and acidic residues. Residues 224 to 430 (RREDSAAGAP…RLWDLLEDPW (207 aa)) form a transcription activation region. Low complexity-rich tracts occupy residues 363–373 (SSVFSSSLPSP) and 393–403 (ALSGGPSLGCG).

In terms of assembly, interacts with MEF2C.

Its subcellular location is the nucleus. Functionally, transcriptional coactivator. Stimulates the transcriptional activity of MEF2C. Stimulates MYOD1 activity in part via MEF2, resulting in an enhancement of skeletal muscle differentiation. The chain is MEF2-activating motif and SAP domain-containing transcriptional regulator (MAMSTR) from Bos taurus (Bovine).